Here is a 255-residue protein sequence, read N- to C-terminus: tRNA (guanine-N(1)-)-methyltransferase (255 aa).

S-adenosyl-L-methionine-binding positions include glycine 117 and 137-142; that span reads LGDFVL.

The protein belongs to the RNA methyltransferase TrmD family. In terms of assembly, homodimer.

The protein localises to the cytoplasm. The enzyme catalyses guanosine(37) in tRNA + S-adenosyl-L-methionine = N(1)-methylguanosine(37) in tRNA + S-adenosyl-L-homocysteine + H(+). Functionally, specifically methylates guanosine-37 in various tRNAs. This Paracidovorax citrulli (strain AAC00-1) (Acidovorax citrulli) protein is tRNA (guanine-N(1)-)-methyltransferase.